The following is a 356-amino-acid chain: Probable arabinogalactan endo-beta-1,4-galactanase A (356 aa).

The N-terminal stretch at 1-21 (MLGKMILLPLFVLLCHSLASA) is a signal peptide. N-linked (GlcNAc...) asparagine glycosylation occurs at N133. Residue E157 is the Proton donor of the active site. Catalysis depends on E268, which acts as the Nucleophile.

This sequence belongs to the glycosyl hydrolase 53 family.

The protein resides in the secreted. It carries out the reaction The enzyme specifically hydrolyzes (1-&gt;4)-beta-D-galactosidic linkages in type I arabinogalactans.. In terms of biological role, endogalactanase involved in the degradation of plant cell wall polysaccharides, and more particularly of hairy regions of pectin. The polypeptide is Probable arabinogalactan endo-beta-1,4-galactanase A (galA) (Neosartorya fischeri (strain ATCC 1020 / DSM 3700 / CBS 544.65 / FGSC A1164 / JCM 1740 / NRRL 181 / WB 181) (Aspergillus fischerianus)).